Reading from the N-terminus, the 551-residue chain is Cytochrome P450 monooxygenase virE (551 aa).

An N-terminal signal peptide occupies residues 1-25 (MPKPWVVFGLGTLVLFLWRLNKIGR). A glycan (N-linked (GlcNAc...) asparagine) is linked at Asn-392. Cys-439 serves as a coordination point for heme.

The protein belongs to the cytochrome P450 family. Heme is required as a cofactor.

It participates in secondary metabolite biosynthesis. Cytochrome P450 monooxygenase; part of the gene cluster that mediates the biosynthesis of virensols and trichoxide, fungal natural products that contain or are derived from a salicylaldehyde core. The pathway begins with the synthesis of the reduced chain in virensol C by the highly reducing polyketide synthase virA via condensation of one acetate and 8 malonate units. VirA has interesting programming rules since the first 2 ketides are fully reduced, the 3 following ketides undergo beta-dehydration, and the last 3 ketides are only reduced to beta-hydroxys to yield the trihydroxy portion. The production of aldehyde virensol C by virA alone is surprising, since virA does not contain a reductase (R) domain that is typically associated with reductive product release in HRPKS. The cupin-domain enzyme virC is involved in enhancing virA product turnover. The short-chain dehydrogenase virB then oxidizes the C-7 alcohol of virensol C to a ketone, yielding virensol D. Virensol D is further transformed to salicylaldehyde 5-deoxyaurocitrin by the short-chain dehydrogenase virD. VirD catalyzes the dehydrogenation of C-3 to form the beta-ketone aldehyde, which is followed by the generation of the nucleophilic C-2 that is required for the intramolecular aldol condensation between C-2 and C-7, itself followed by dehydration and aromatization which leads to salicylaldehyde 5-deoxyaurocitrin. While the dehydrogenation of virensol D is definitely catalyzed by virD, the aldol condensation and dehydration may be uncatalyzed or assisted by virD. The short chain dehydrogenase virG then converts salicylaldehyde 5-deoxyaurocitrin into virensol B which is further hydroxylated by the cytochrome P450 monooxygenase virE to yield the hydroquinone virensol A. VirI then may oxidize virensol A to form the quinone, while virH performs the epoxidation. Finally, the two remaining short-chain dehydrogenases, virK and virL, are probably responsible for reducing the ketones to the corresponding alcohols to furnish the epoxycyclohexanol structure in trichoxide. The chain is Cytochrome P450 monooxygenase virE from Hypocrea virens (strain Gv29-8 / FGSC 10586) (Gliocladium virens).